The sequence spans 512 residues: Histidine ammonia-lyase (512 aa).

The segment at residues 146 to 148 is a cross-link (5-imidazolinone (Ala-Gly)); sequence ASG. At Ser147 the chain carries 2,3-didehydroalanine (Ser).

This sequence belongs to the PAL/histidase family. Post-translationally, contains an active site 4-methylidene-imidazol-5-one (MIO), which is formed autocatalytically by cyclization and dehydration of residues Ala-Ser-Gly.

It localises to the cytoplasm. It catalyses the reaction L-histidine = trans-urocanate + NH4(+). Its pathway is amino-acid degradation; L-histidine degradation into L-glutamate; N-formimidoyl-L-glutamate from L-histidine: step 1/3. The chain is Histidine ammonia-lyase from Paracidovorax citrulli (strain AAC00-1) (Acidovorax citrulli).